The following is a 183-amino-acid chain: Small ribosomal subunit protein cS23y (183 aa).

It belongs to the chloroplast-specific ribosomal protein cS23 family. In terms of assembly, part of the 30S ribosomal subunit.

It is found in the plastid. It localises to the chloroplast. Component of the chloroplast ribosome (chloro-ribosome), a dedicated translation machinery responsible for the synthesis of chloroplast genome-encoded proteins, including proteins of the transcription and translation machinery and components of the photosynthetic apparatus. The chain is Small ribosomal subunit protein cS23y from Arabidopsis thaliana (Mouse-ear cress).